The primary structure comprises 83 residues: Mu-theraphotoxin-Hhn2k (83 aa).

The N-terminal stretch at 1-21 is a signal peptide; sequence MKASMFLALAGLVLLFVVDYA. Residues 22–48 constitute a propeptide that is removed on maturation; sequence SESEEKEFPIELLSKIFAVDVFKGEER. 3 cysteine pairs are disulfide-bonded: C50-C65, C57-C70, and C64-C77. At L81 the chain carries Leucine amide.

The protein belongs to the neurotoxin 10 (Hwtx-1) family. 15 (Hntx-3) subfamily. Monomer. As to expression, expressed by the venom gland.

It is found in the secreted. Lethal neurotoxin. Selectively blocks tetrodotoxin-sensitive voltage-gated sodium channels (Nav). Does not affect tetrodotoxin-resistant voltage-gated sodium channels or calcium channels. The protein is Mu-theraphotoxin-Hhn2k of Cyriopagopus hainanus (Chinese bird spider).